We begin with the raw amino-acid sequence, 1335 residues long: MSPSKESDELIFFVNGKKVTERNADPEVNLLFYLRKVIRLTGTKYGCGGGDCGACTVMISRYDPISKRISHFSATACLVPICSLHGAAVTTVEGIGSTKTRIHPVQERIAKGHGTQCGFCTPGMVMSIYTLLRNHPEPSTEQIMETLGGNLCRCTGYRPIVESAKSFCPSSTCCQMNGEGKCCLDEEKNEPERKNSVCTKLYEKKEFQPLDPTQELIFPPELMRMAEESQNTVLTFRGERTTWIAPGTLNDLLELKMKHPSAPLVIGNTYLGLHMKFTDVSYPIIISPARILELFVVTNTKQGLTLGAGLSLTQVKNVLSDVVSRLPKEKTQIYCALLKQLKTLAGQQIRNVASLGGHIISRLPTSDLNPILGIGNCILNVASTEGIQQIPLNDHFLAGVPDAILKPEQVLISVFVPRSSKWEFVSAFRQAPRQQNAFATVNAGMKVVFKEDTNTITDLGILYGGIGATVISADKSCRQLIGRCWDEEMLDDAGKMICEEVSLLMAAPGGMEEYRKTLAISFLFMFYLDVLKQLKTRDPHKYPDISQKLLHILEDFPLTMPYGMQSFQDVDFQQPLQDPIGRPIMHQSGIKHATGEAVFCDDMSVLPGELFLAVVTSSKSHAKIISLDASEALASLGVVDVVTARDVPGDNGREEESLYAQDEVICVGQIVCAVAADSYAHAQQAAKKVKIVYQDIEPMIVTVQDALQYESFIGPERKLEQGNVEEAFQCADQILEGEVHLGGQEHFYMETQSVRVVPKGEDKEMDIYVSSQDAAFTQEMVARTLGIPKNRINCHVKRVGGAFGGKASKPGLLASVAAVAAQKTGRPIRFILERRDDMLITGGRHPLLGKYKIGFMNNGKIKAADIQLYINGGCTPDDSELVIEYALLKLENAYKIPNLRVRGRVCKTNLPSNTAFRGFGFPQGAFVTETCMSAVAAKCRLPPEKVRELNMYRTIDRTIHNQEFDPTNLLQCWEACVENSSYYNRKKAVDEFNQQRFWKKRGIAIIPMKFSVGFPKTFYYQAAALVQIYTDGSVLVAHGGVELGQGINTKMIQVASRELKIPMSYIHLDEMSTVTVPNTVTTGASTGADVNGRAVQNACQILMKRLEPIIKQNPSGTWEEWVKEAFVQSISLSATGYFRGYQADMDWEKGEGDIFPYFVFGAACSEVEIDCLTGAHKNIRTDIVMDGSFSINPAVDIGQIEGAFVQGLGLYTLEELKYSPEGVLYTRGPHQYKIASVTDIPEEFHVSLLTPTPNPKAIYSSKGLGEAGTFLGCSVFFAIAAAVAAAREERGLSPIWAINSPATAEVIRMACEDQFTNLVPQTDSKCCKPWSIPVA.

The region spanning 8–95 (DELIFFVNGK…GAAVTTVEGI (88 aa)) is the 2Fe-2S ferredoxin-type domain. Residues Cys47, Cys52, Cys55, and Cys77 each coordinate [2Fe-2S] cluster. Gln116 contacts Mo-molybdopterin. Positions 117, 120, 152, and 154 each coordinate [2Fe-2S] cluster. One can recognise an FAD-binding PCMH-type domain in the interval 236-421 (FRGERTTWIA…ISVFVPRSSK (186 aa)). FAD is bound at residue 264-271 (LVIGNTYL). Ser320 bears the Phosphoserine mark. Residues Ser354, His358, Asp367, and Leu411 each contribute to the FAD site. Positions 802, 1043, and 1199 each coordinate Mo-molybdopterin. The active-site Proton acceptor; for azaheterocycle hydroxylase activity is the Glu1266.

It belongs to the xanthine dehydrogenase family. As to quaternary structure, homodimer. Requires [2Fe-2S] cluster as cofactor. It depends on FAD as a cofactor. Mo-molybdopterin is required as a cofactor. Highly expressed in liver (at protein level). In liver, the expression is greater in males than females.

It localises to the cytoplasm. The catalysed reaction is an aldehyde + O2 + H2O = a carboxylate + H2O2 + H(+). Its activity is regulated as follows. Inhibited by potassium cyanide, menadione, benzamidine, raloxifene and norharmane. Functionally, oxidase with broad substrate specificity, oxidizing aromatic azaheterocycles, such as N1-methylnicotinamide and phthalazine, as well as aldehydes, such as benzaldehyde, retinal and pyridoxal. Plays a key role in the metabolism of xenobiotics and drugs containing aromatic azaheterocyclic substituents. Is probably involved in the regulation of reactive oxygen species homeostasis. May be a prominent source of superoxide generation via the one-electron reduction of molecular oxygen. May also catalyze nitric oxide (NO) production via the reduction of nitrite to NO with NADH or aldehyde as electron donor. This is Aldehyde oxidase 3 (Aox3) from Mus musculus (Mouse).